Reading from the N-terminus, the 409-residue chain is Shaggy-related protein kinase NtK-1 (409 aa).

The disordered stretch occupies residues 1 to 27 (MTSVGLAPVSGLRESSSHSVGVDRLPE). The region spanning 73–357 (YMAERIVGQG…ALEAVTHAFF (285 aa)) is the Protein kinase domain. Residues 79–87 (VGQGSFGVV) and lysine 102 contribute to the ATP site. The active-site Proton acceptor is the aspartate 198.

This sequence belongs to the protein kinase superfamily. CMGC Ser/Thr protein kinase family. GSK-3 subfamily. Autophosphorylated mainly on threonine and serine residues.

It catalyses the reaction L-seryl-[protein] + ATP = O-phospho-L-seryl-[protein] + ADP + H(+). The catalysed reaction is L-threonyl-[protein] + ATP = O-phospho-L-threonyl-[protein] + ADP + H(+). Functionally, may mediate extracellular signals to regulate transcription in differentiating cells. This Nicotiana tabacum (Common tobacco) protein is Shaggy-related protein kinase NtK-1 (NTK-1).